Consider the following 173-residue polypeptide: Co-chaperone protein HscB homolog (173 aa).

One can recognise a J domain in the interval 5–77 (CHFALFDLQP…SQRARYLLAL (73 aa)).

Belongs to the HscB family. In terms of assembly, interacts with HscA and stimulates its ATPase activity.

Its function is as follows. Co-chaperone involved in the maturation of iron-sulfur cluster-containing proteins. Seems to help targeting proteins to be folded toward HscA. The chain is Co-chaperone protein HscB homolog from Ectopseudomonas mendocina (strain ymp) (Pseudomonas mendocina).